The following is a 429-amino-acid chain: Uterine milk protein (429 aa).

A signal peptide spans 1 to 25 (MSHRRMQLALSLVFILCGLFNSIFC). 2 N-linked (GlcNAc...) asparagine glycosylation sites follow: asparagine 222 and asparagine 268.

Belongs to the serpin family. UTMP subfamily. In terms of processing, glycosylated; carries the so-called mannose 6-phosphate lysosomal recognition marker on its carbohydrate chains. As to expression, secreted by ovine endometrium under the influence of progesterone.

This Ovis aries (Sheep) protein is Uterine milk protein.